Here is a 405-residue protein sequence, read N- to C-terminus: S-adenosylmethionine synthase (405 aa).

Residue 139-144 (GQGSVD) coordinates ATP.

It belongs to the AdoMet synthase 2 family. Requires Mg(2+) as cofactor.

It catalyses the reaction L-methionine + ATP + H2O = S-adenosyl-L-methionine + phosphate + diphosphate. It functions in the pathway amino-acid biosynthesis; S-adenosyl-L-methionine biosynthesis; S-adenosyl-L-methionine from L-methionine: step 1/1. In terms of biological role, catalyzes the formation of S-adenosylmethionine from methionine and ATP. In Thermococcus gammatolerans (strain DSM 15229 / JCM 11827 / EJ3), this protein is S-adenosylmethionine synthase.